The sequence spans 340 residues: Ketol-acid reductoisomerase (NADP(+)) (340 aa).

The 180-residue stretch at 3–182 (VTMYYEEDVE…GCARVGIIET (180 aa)) folds into the KARI N-terminal Rossmann domain. Residues 26–29 (YGSQ), Arg-49, Ser-53, and 83–86 (DELQ) each bind NADP(+). The active site involves His-108. Residue Gly-134 coordinates NADP(+). Residues 183–328 (TFKEETEEDL…AELRKAMPFT (146 aa)) form the KARI C-terminal knotted domain. Mg(2+) is bound by residues Asp-191, Glu-195, Glu-227, and Glu-231. Ser-252 is a binding site for substrate.

It belongs to the ketol-acid reductoisomerase family. Mg(2+) is required as a cofactor.

The catalysed reaction is (2R)-2,3-dihydroxy-3-methylbutanoate + NADP(+) = (2S)-2-acetolactate + NADPH + H(+). It catalyses the reaction (2R,3R)-2,3-dihydroxy-3-methylpentanoate + NADP(+) = (S)-2-ethyl-2-hydroxy-3-oxobutanoate + NADPH + H(+). Its pathway is amino-acid biosynthesis; L-isoleucine biosynthesis; L-isoleucine from 2-oxobutanoate: step 2/4. The protein operates within amino-acid biosynthesis; L-valine biosynthesis; L-valine from pyruvate: step 2/4. Functionally, involved in the biosynthesis of branched-chain amino acids (BCAA). Catalyzes an alkyl-migration followed by a ketol-acid reduction of (S)-2-acetolactate (S2AL) to yield (R)-2,3-dihydroxy-isovalerate. In the isomerase reaction, S2AL is rearranged via a Mg-dependent methyl migration to produce 3-hydroxy-3-methyl-2-ketobutyrate (HMKB). In the reductase reaction, this 2-ketoacid undergoes a metal-dependent reduction by NADPH to yield (R)-2,3-dihydroxy-isovalerate. The protein is Ketol-acid reductoisomerase (NADP(+)) of Lactococcus lactis subsp. cremoris (strain MG1363).